A 508-amino-acid polypeptide reads, in one-letter code: Photosystem II CP47 reaction center protein (508 aa).

Transmembrane regions (helical) follow at residues 21 to 36, 101 to 115, 140 to 156, 203 to 218, 237 to 252, and 457 to 472; these read SVHIMHTALVAGWAGS, IMFSGLMFLAAIWHW, GIHLFLSGVACFGFGAF, IAAGILGILAGLFHLS, VLSSSIAAVFFAAFIV, and TFALLFFSGHIWHGAR.

It belongs to the PsbB/PsbC family. PsbB subfamily. In terms of assembly, PSII is composed of 1 copy each of membrane proteins PsbA, PsbB, PsbC, PsbD, PsbE, PsbF, PsbH, PsbI, PsbJ, PsbK, PsbL, PsbM, PsbT, PsbX, PsbY, PsbZ, Psb30/Ycf12, at least 3 peripheral proteins of the oxygen-evolving complex and a large number of cofactors. It forms dimeric complexes. Requires Binds multiple chlorophylls. PSII binds additional chlorophylls, carotenoids and specific lipids. as cofactor.

Its subcellular location is the plastid. It is found in the chloroplast thylakoid membrane. Functionally, one of the components of the core complex of photosystem II (PSII). It binds chlorophyll and helps catalyze the primary light-induced photochemical processes of PSII. PSII is a light-driven water:plastoquinone oxidoreductase, using light energy to abstract electrons from H(2)O, generating O(2) and a proton gradient subsequently used for ATP formation. The sequence is that of Photosystem II CP47 reaction center protein from Pinus koraiensis (Korean pine).